The chain runs to 176 residues: ATP synthase subunit delta (176 aa).

Belongs to the ATPase delta chain family. In terms of assembly, F-type ATPases have 2 components, F(1) - the catalytic core - and F(0) - the membrane proton channel. F(1) has five subunits: alpha(3), beta(3), gamma(1), delta(1), epsilon(1). F(0) has three main subunits: a(1), b(2) and c(10-14). The alpha and beta chains form an alternating ring which encloses part of the gamma chain. F(1) is attached to F(0) by a central stalk formed by the gamma and epsilon chains, while a peripheral stalk is formed by the delta and b chains.

The protein localises to the cell inner membrane. In terms of biological role, f(1)F(0) ATP synthase produces ATP from ADP in the presence of a proton or sodium gradient. F-type ATPases consist of two structural domains, F(1) containing the extramembraneous catalytic core and F(0) containing the membrane proton channel, linked together by a central stalk and a peripheral stalk. During catalysis, ATP synthesis in the catalytic domain of F(1) is coupled via a rotary mechanism of the central stalk subunits to proton translocation. Functionally, this protein is part of the stalk that links CF(0) to CF(1). It either transmits conformational changes from CF(0) to CF(1) or is implicated in proton conduction. This Polaromonas sp. (strain JS666 / ATCC BAA-500) protein is ATP synthase subunit delta.